The chain runs to 200 residues: Riboflavin kinase (200 aa).

A disordered region spans residues Met1–Pro20. Residues Thr42 and Asn44 each coordinate Mg(2+). Glu110 acts as the Nucleophile in catalysis.

The protein belongs to the flavokinase family. Zn(2+) is required as a cofactor. It depends on Mg(2+) as a cofactor.

It catalyses the reaction riboflavin + ATP = FMN + ADP + H(+). The protein operates within cofactor biosynthesis; FMN biosynthesis; FMN from riboflavin (ATP route): step 1/1. Catalyzes the phosphorylation of riboflavin (vitamin B2) to form flavin mononucleotide (FMN) coenzyme. The sequence is that of Riboflavin kinase (FMN1) from Pyricularia oryzae (strain 70-15 / ATCC MYA-4617 / FGSC 8958) (Rice blast fungus).